A 336-amino-acid chain; its full sequence is F420-dependent glucose-6-phosphate dehydrogenase (336 aa).

D39 is a coenzyme F420-(gamma-Glu)n binding site. Residue H40 is the Proton donor of the active site. Coenzyme F420-(gamma-Glu)n is bound by residues T76 and 107–108 (TG). E109 functions as the Proton acceptor in the catalytic mechanism. Coenzyme F420-(gamma-Glu)n-binding positions include N112, 177–178 (GG), and 180–181 (VV). Positions 195, 198, 259, and 283 each coordinate substrate.

This sequence belongs to the F420-dependent glucose-6-phosphate dehydrogenase family. In terms of assembly, homodimer.

The catalysed reaction is oxidized coenzyme F420-(gamma-L-Glu)(n) + D-glucose 6-phosphate + H(+) = 6-phospho-D-glucono-1,5-lactone + reduced coenzyme F420-(gamma-L-Glu)(n). In terms of biological role, catalyzes the coenzyme F420-dependent oxidation of glucose 6-phosphate (G6P) to 6-phosphogluconolactone. Appears to have a role in resistance to oxidative stress, via its consumption of G6P that serves as a source of reducing power to combat oxidative stress in mycobacteria. The protein is F420-dependent glucose-6-phosphate dehydrogenase of Mycolicibacterium fortuitum (Mycobacterium fortuitum).